We begin with the raw amino-acid sequence, 329 residues long: Phenylalanine--tRNA ligase alpha subunit (329 aa).

Glu253 contacts Mg(2+).

This sequence belongs to the class-II aminoacyl-tRNA synthetase family. Phe-tRNA synthetase alpha subunit type 1 subfamily. Tetramer of two alpha and two beta subunits. Requires Mg(2+) as cofactor.

It localises to the cytoplasm. It catalyses the reaction tRNA(Phe) + L-phenylalanine + ATP = L-phenylalanyl-tRNA(Phe) + AMP + diphosphate + H(+). This Coxiella burnetii (strain CbuK_Q154) (Coxiella burnetii (strain Q154)) protein is Phenylalanine--tRNA ligase alpha subunit.